The chain runs to 267 residues: Regulatory protein RecX (267 aa).

The protein belongs to the RecX family.

It localises to the cytoplasm. In terms of biological role, modulates RecA activity. In Staphylococcus haemolyticus (strain JCSC1435), this protein is Regulatory protein RecX.